The sequence spans 243 residues: R-spondin-2 (243 aa).

A signal peptide spans 1–21 (MQFQLFSFALIILNCVDYSHC). 11 disulfide bridges follow: Cys-40–Cys-46, Cys-43–Cys-52, Cys-55–Cys-74, Cys-78–Cys-93, Cys-96–Cys-104, Cys-101–Cys-110, Cys-113–Cys-124, Cys-128–Cys-141, Cys-145–Cys-187, Cys-156–Cys-163, and Cys-196–Cys-203. The stretch at 90–134 (MNRCSRCRIENCDSCFSRDFCIKCKSGFYSLKGQCFEECPEGFAP) is one FU repeat. The 61-residue stretch at 144 to 204 (GCEVGPWSEW…RCKMAIRHCP (61 aa)) folds into the TSP type-1 domain. N-linked (GlcNAc...) asparagine glycosylation occurs at Asn-160. Positions 204-224 (PGGKRTTKKKDKRNKKKKKKL) are enriched in basic residues. The disordered stretch occupies residues 204–243 (PGGKRTTKKKDKRNKKKKKKLLERAQEQHSVVLATDRSSQ).

This sequence belongs to the R-spondin family. As to quaternary structure, binds heparin.

It localises to the secreted. Activator of the canonical Wnt signaling pathway by acting as a ligand for lgr4-6 receptors. Upon binding to lgr4-6 (lgr4, lgr5 or lgr6), lgr4-6 associate with phosphorylated lrp6 and frizzled receptors that are activated by extracellular Wnt receptors, triggering the canonical Wnt signaling pathway to increase expression of target genes. Acts both in the canonical Wnt/beta-catenin-dependent pathway and in non-canonical Wnt signaling pathway. Activates neural markers and promotes muscle formation. Overexpression blocks activin, nodal and BMP4 signaling, suggesting that it may negatively regulate the TGF-beta pathway. During embryonic development, plays a crucial role in limb specification, amplifying the Wnt signaling pathway independently of LGR4-6 receptors, possibly by acting as a direct antagonistic ligand to RNF43 and ZNRF3, hence governing the number of limbs an embryo should form. This Xenopus laevis (African clawed frog) protein is R-spondin-2 (rspo2).